The following is a 404-amino-acid chain: Formate-dependent phosphoribosylglycinamide formyltransferase (404 aa).

N(1)-(5-phospho-beta-D-ribosyl)glycinamide contacts are provided by residues 25-26 (EL) and glutamate 85. ATP-binding positions include arginine 118, lysine 159, 164-169 (SSGKGQ), 199-202 (EGFI), and glutamate 207. The ATP-grasp domain maps to 123-318 (RLAAEELGLA…EFELHARAIL (196 aa)). The Mg(2+) site is built by glutamate 277 and glutamate 289. Residues aspartate 296, lysine 365, and 372 to 373 (RR) each bind N(1)-(5-phospho-beta-D-ribosyl)glycinamide.

It belongs to the PurK/PurT family. As to quaternary structure, homodimer.

The enzyme catalyses N(1)-(5-phospho-beta-D-ribosyl)glycinamide + formate + ATP = N(2)-formyl-N(1)-(5-phospho-beta-D-ribosyl)glycinamide + ADP + phosphate + H(+). It participates in purine metabolism; IMP biosynthesis via de novo pathway; N(2)-formyl-N(1)-(5-phospho-D-ribosyl)glycinamide from N(1)-(5-phospho-D-ribosyl)glycinamide (formate route): step 1/1. Involved in the de novo purine biosynthesis. Catalyzes the transfer of formate to 5-phospho-ribosyl-glycinamide (GAR), producing 5-phospho-ribosyl-N-formylglycinamide (FGAR). Formate is provided by PurU via hydrolysis of 10-formyl-tetrahydrofolate. This Burkholderia vietnamiensis (strain G4 / LMG 22486) (Burkholderia cepacia (strain R1808)) protein is Formate-dependent phosphoribosylglycinamide formyltransferase.